The chain runs to 451 residues: 23S rRNA (uracil(1939)-C(5))-methyltransferase RlmD (451 aa).

The TRAM domain occupies 20 to 78; sequence QIPAGKKQRLTIERLSDDGRGIAFLEGKTWFVAGSLAGEEVEARVLNARGKVVEARTER. [4Fe-4S] cluster is bound by residues Cys91, Cys97, Cys100, and Cys179. Residues Gln283, Phe312, Asn317, Glu333, Asp360, and Asp381 each contribute to the S-adenosyl-L-methionine site. Cys407 functions as the Nucleophile in the catalytic mechanism.

Belongs to the class I-like SAM-binding methyltransferase superfamily. RNA M5U methyltransferase family. RlmD subfamily.

It catalyses the reaction uridine(1939) in 23S rRNA + S-adenosyl-L-methionine = 5-methyluridine(1939) in 23S rRNA + S-adenosyl-L-homocysteine + H(+). Its function is as follows. Catalyzes the formation of 5-methyl-uridine at position 1939 (m5U1939) in 23S rRNA. The chain is 23S rRNA (uracil(1939)-C(5))-methyltransferase RlmD from Pseudomonas savastanoi pv. phaseolicola (strain 1448A / Race 6) (Pseudomonas syringae pv. phaseolicola (strain 1448A / Race 6)).